The following is a 974-amino-acid chain: ATP-dependent RNA helicase glh-2 (974 aa).

The segment at 212-435 (HESGFGGGKS…SGFGGGNDGG (224 aa)) is disordered. Gly residues predominate over residues 215–250 (GFGGGKSGGFGGGNSGGSGFGSGGNSNGFGSGGGGQ). Residues 256–267 (NNNCFNCQQPGH) show a composition bias toward polar residues. CCHC-type zinc fingers lie at residues 257–274 (NNCF…DCPE) and 282–299 (RVCY…DCPE). Basic and acidic residues-rich tracts occupy residues 268–282 (RSND…REPR) and 293–307 (NSRD…REGR). Residues 309 to 364 (GFTGGSSGFGGGNGGGTGFDSGLTNGFGSGNNGESGFGSGGFGGNSNGFGSGGGGQ) are compositionally biased toward gly residues. The span at 370 to 381 (NNNCFNCQQPGH) shows a compositional bias: polar residues. 2 consecutive CCHC-type zinc fingers follow at residues 371 to 388 (NNCF…DCPE) and 396 to 413 (RVCY…DCPE). Composition is skewed to basic and acidic residues over residues 382 to 396 (RSND…REPR) and 407 to 421 (NSRD…REGR). Residues 426-435 (SGFGGGNDGG) show a composition bias toward gly residues. 2 CCHC-type zinc fingers span residues 453-470 (MKCF…ECPE) and 473-490 (RGCF…ECPN). The Q motif signature appears at 552–580 (KTFSEANLGETMKKNVAHAGYTKTTPIQQ). The Helicase ATP-binding domain maps to 583–767 (LPLIHQGHDI…RNHLKEGYIM (185 aa)). An ATP-binding site is contributed by 596-603 (AQTGSGKT). The DEAD box motif lies at 710–713 (DEAD). In terms of domain architecture, Helicase C-terminal spans 803–950 (DIDSYTTEKN…LVPEWMQGAS (148 aa)).

The protein belongs to the DEAD box helicase family. DDX4/VASA subfamily. Interacts (via C-terminus) with kgb-1.

It catalyses the reaction ATP + H2O = ADP + phosphate + H(+). Probable ATP-binding RNA helicase. The polypeptide is ATP-dependent RNA helicase glh-2 (glh-2) (Caenorhabditis elegans).